The following is a 261-amino-acid chain: Thiamine thiazole synthase (261 aa).

NAD(+) contacts are provided by residues Ser40, 59 to 60, Gly67, Val133, and 159 to 161; these read ER and HID. Fe cation contacts are provided by Asp161 and His176. NAD(+) is bound by residues Ser179 and Met226. Residue Arg236 coordinates glycine.

This sequence belongs to the THI4 family. As to quaternary structure, homooctamer; tetramer of dimers. Fe(2+) is required as a cofactor.

The enzyme catalyses hydrogen sulfide + glycine + NAD(+) = ADP-5-ethyl-4-methylthiazole-2-carboxylate + nicotinamide + 3 H2O + H(+). The protein operates within cofactor biosynthesis; thiamine diphosphate biosynthesis. Its function is as follows. Involved in the biosynthesis of the thiazole moiety of thiamine. Catalyzes the conversion of NAD and glycine to adenosine diphosphate 5-(2-hydroxyethyl)-4-methylthiazole-2-carboxylate (ADT), an adenylated thiazole intermediate, using free sulfide as a source of sulfur. The polypeptide is Thiamine thiazole synthase (Methanococcus maripaludis (strain C5 / ATCC BAA-1333)).